The primary structure comprises 176 residues: ATP-dependent protease subunit HslV (176 aa).

The active site involves Thr2. 3 residues coordinate Na(+): Ala157, Cys160, and Thr163.

The protein belongs to the peptidase T1B family. HslV subfamily. As to quaternary structure, a double ring-shaped homohexamer of HslV is capped on each side by a ring-shaped HslU homohexamer. The assembly of the HslU/HslV complex is dependent on binding of ATP.

It is found in the cytoplasm. It carries out the reaction ATP-dependent cleavage of peptide bonds with broad specificity.. Allosterically activated by HslU binding. In terms of biological role, protease subunit of a proteasome-like degradation complex believed to be a general protein degrading machinery. This Buchnera aphidicola subsp. Acyrthosiphon pisum (strain APS) (Acyrthosiphon pisum symbiotic bacterium) protein is ATP-dependent protease subunit HslV.